The primary structure comprises 545 residues: Chaperonin GroEL (545 aa).

ATP-binding positions include 29–32 (TIGP), 86–90 (DGTTT), Gly-413, 478–480 (NAA), and Asp-494.

It belongs to the chaperonin (HSP60) family. Forms a cylinder of 14 subunits composed of two heptameric rings stacked back-to-back. Interacts with the co-chaperonin GroES.

It localises to the cytoplasm. The enzyme catalyses ATP + H2O + a folded polypeptide = ADP + phosphate + an unfolded polypeptide.. Functionally, together with its co-chaperonin GroES, plays an essential role in assisting protein folding. The GroEL-GroES system forms a nano-cage that allows encapsulation of the non-native substrate proteins and provides a physical environment optimized to promote and accelerate protein folding. In Exiguobacterium sibiricum (strain DSM 17290 / CCUG 55495 / CIP 109462 / JCM 13490 / 255-15), this protein is Chaperonin GroEL.